The chain runs to 566 residues: Alpha-keto-acid decarboxylase (566 aa).

Glu61 is a thiamine diphosphate binding site. The segment at 396–478 is thiamine pyrophosphate binding; that stretch reads TSFYGMADHR…VVVNNDGYTV (83 aa). Mg(2+)-binding residues include Asp446, Asn473, and Gly475.

Belongs to the TPP enzyme family. A metal cation is required as a cofactor. It depends on thiamine diphosphate as a cofactor.

Functionally, decarboxylates branched-chain and aromatic alpha-keto acids to aldehydes. The chain is Alpha-keto-acid decarboxylase (kdc) from Mycobacterium ulcerans (strain Agy99).